We begin with the raw amino-acid sequence, 414 residues long: Serine hydroxymethyltransferase (414 aa).

Residues L121 and 125–127 (GHL) each bind (6S)-5,6,7,8-tetrahydrofolate. K229 carries the post-translational modification N6-(pyridoxal phosphate)lysine.

This sequence belongs to the SHMT family. As to quaternary structure, homodimer. The cofactor is pyridoxal 5'-phosphate.

The protein localises to the cytoplasm. It catalyses the reaction (6R)-5,10-methylene-5,6,7,8-tetrahydrofolate + glycine + H2O = (6S)-5,6,7,8-tetrahydrofolate + L-serine. It functions in the pathway one-carbon metabolism; tetrahydrofolate interconversion. It participates in amino-acid biosynthesis; glycine biosynthesis; glycine from L-serine: step 1/1. Its function is as follows. Catalyzes the reversible interconversion of serine and glycine with tetrahydrofolate (THF) serving as the one-carbon carrier. This reaction serves as the major source of one-carbon groups required for the biosynthesis of purines, thymidylate, methionine, and other important biomolecules. Also exhibits THF-independent aldolase activity toward beta-hydroxyamino acids, producing glycine and aldehydes, via a retro-aldol mechanism. This chain is Serine hydroxymethyltransferase, found in Verminephrobacter eiseniae (strain EF01-2).